The following is a 680-amino-acid chain: Meiotic recombination protein REC8 (680 aa).

2 stretches are compositionally biased toward low complexity: residues 278 to 290 (ENDN…GGED) and 436 to 446 (SLVSTQSSSST). Disordered regions lie at residues 278 to 297 (ENDN…ENEG), 431 to 467 (RKRA…YSSD), and 540 to 560 (EQNF…GSQQ). The segment covering 550–560 (SNSCFSDGSQQ) has biased composition (polar residues).

It belongs to the rad21 family. Post-translationally, proteolytically cleaved by ESP1. In terms of processing, phosphorylated by CDC5. CDC5 phosphorylation is necessary for cleavage by ESP1 and subsequent removal from chromosome arms.

It is found in the nucleus. The protein localises to the chromosome. It localises to the centromere. Functionally, replaces the SCC1 mitosis-specific cohesin to ensure sister chromatid cohesion during meiosis. Is cleaved by ESP1 shortly before the first meiotic division, and dissociates from chromatin, allowing sister chromatids to segregate. Is protected from cleavage by SPO13. Promotes localization of the LINC complex subunit MPS3 on nuclear envelope in mitotic cells. In Saccharomyces cerevisiae (strain ATCC 204508 / S288c) (Baker's yeast), this protein is Meiotic recombination protein REC8.